The primary structure comprises 83 residues: Cell division topological specificity factor (83 aa).

This sequence belongs to the MinE family.

Functionally, prevents the cell division inhibition by proteins MinC and MinD at internal division sites while permitting inhibition at polar sites. This ensures cell division at the proper site by restricting the formation of a division septum at the midpoint of the long axis of the cell. The chain is Cell division topological specificity factor from Bordetella parapertussis (strain 12822 / ATCC BAA-587 / NCTC 13253).